The chain runs to 274 residues: Copper chaperone for superoxide dismutase (274 aa).

The HMA domain maps to Ala11–Val74. Residues Cys22 and Cys25 each contribute to the Cu cation site. Lys76 is covalently cross-linked (Glycyl lysine isopeptide (Lys-Gly) (interchain with G-Cter in ubiquitin)). The interval Ala88–Ala234 is superoxide dismutase-like. Cys141 and Cys227 are joined by a disulfide. Residues His147, His155, His164, and Asp167 each coordinate Zn(2+). Glycyl lysine isopeptide (Lys-Gly) (interchain with G-Cter in ubiquitin) cross-links involve residues Lys189, Lys216, and Lys241. Cu cation-binding residues include Cys244 and Cys246.

The protein in the C-terminal section; belongs to the Cu-Zn superoxide dismutase family. As to quaternary structure, homodimer, and heterodimer with SOD1. Interacts with COMMD1. Interacts with XIAP/BIRC4. Interacts with SLC31A1(via C-terminal domain); this interaction is Cu(1+)-mediated. The heterodimer CCS:SOD1 interacts with SLC31A1; this heterotrimer is Cu(1+)-mediated and its maintenance is regulated through SOD1 activation. Cu(2+) is required as a cofactor. The cofactor is Zn(2+). Ubiquitinion by XIAP/BIRC4 leads to enhancement of its chaperone activity toward its physiologic target, SOD1, rather than proteasomal degradation. XIAP/BIRC4 preferentially ubiquitinates at Lys-241.

Its subcellular location is the cytoplasm. In terms of biological role, delivers copper to copper zinc superoxide dismutase (SOD1). The protein is Copper chaperone for superoxide dismutase of Sus scrofa (Pig).